Here is a 622-residue protein sequence, read N- to C-terminus: Coiled-coil domain-containing protein 17 (622 aa).

Coiled-coil stretches lie at residues 81-102, 146-207, and 294-320; these read RSAL…QEMR, ARRV…LEVL, and GELP…RGRA. Disordered stretches follow at residues 334 to 356 and 584 to 622; these read SLQP…PLPP and PAVG…PVSF. The segment covering 344-356 has biased composition (pro residues); that stretch reads PLLPPPVAPPLPP. Residues 593 to 615 are compositionally biased toward basic and acidic residues; that stretch reads PRTEEPLSGVKDRDEGLGPHHSS.

The polypeptide is Coiled-coil domain-containing protein 17 (CCDC17) (Homo sapiens (Human)).